Here is a 940-residue protein sequence, read N- to C-terminus: Isoleucine--tRNA ligase (940 aa).

A 'HIGH' region motif is present at residues 58–68; sequence PYANGSIHIGH. Glu-564 contributes to the L-isoleucyl-5'-AMP binding site. Positions 605 to 609 match the 'KMSKS' region motif; it reads KMSKS. Residue Lys-608 participates in ATP binding. Zn(2+) is bound by residues Cys-903, Cys-906, Cys-923, and Cys-926.

This sequence belongs to the class-I aminoacyl-tRNA synthetase family. IleS type 1 subfamily. Monomer. Zn(2+) serves as cofactor.

The protein resides in the cytoplasm. The catalysed reaction is tRNA(Ile) + L-isoleucine + ATP = L-isoleucyl-tRNA(Ile) + AMP + diphosphate. Functionally, catalyzes the attachment of isoleucine to tRNA(Ile). As IleRS can inadvertently accommodate and process structurally similar amino acids such as valine, to avoid such errors it has two additional distinct tRNA(Ile)-dependent editing activities. One activity is designated as 'pretransfer' editing and involves the hydrolysis of activated Val-AMP. The other activity is designated 'posttransfer' editing and involves deacylation of mischarged Val-tRNA(Ile). This is Isoleucine--tRNA ligase from Shewanella woodyi (strain ATCC 51908 / MS32).